We begin with the raw amino-acid sequence, 160 residues long: 2-C-methyl-D-erythritol 2,4-cyclodiphosphate synthase (160 aa).

A divalent metal cation contacts are provided by Asp11 and His13. 4-CDP-2-C-methyl-D-erythritol 2-phosphate contacts are provided by residues Asp11 to His13 and His37 to Ser38. His45 is a binding site for a divalent metal cation. 4-CDP-2-C-methyl-D-erythritol 2-phosphate is bound by residues Asp59 to Gly61, Thr135 to Glu138, and Arg145.

Belongs to the IspF family. As to quaternary structure, homotrimer. A divalent metal cation is required as a cofactor.

The catalysed reaction is 4-CDP-2-C-methyl-D-erythritol 2-phosphate = 2-C-methyl-D-erythritol 2,4-cyclic diphosphate + CMP. It participates in isoprenoid biosynthesis; isopentenyl diphosphate biosynthesis via DXP pathway; isopentenyl diphosphate from 1-deoxy-D-xylulose 5-phosphate: step 4/6. Its function is as follows. Involved in the biosynthesis of isopentenyl diphosphate (IPP) and dimethylallyl diphosphate (DMAPP), two major building blocks of isoprenoid compounds. Catalyzes the conversion of 4-diphosphocytidyl-2-C-methyl-D-erythritol 2-phosphate (CDP-ME2P) to 2-C-methyl-D-erythritol 2,4-cyclodiphosphate (ME-CPP) with a corresponding release of cytidine 5-monophosphate (CMP). The protein is 2-C-methyl-D-erythritol 2,4-cyclodiphosphate synthase of Nostoc punctiforme (strain ATCC 29133 / PCC 73102).